Here is a 630-residue protein sequence, read N- to C-terminus: 1-deoxy-D-xylulose-5-phosphate synthase (630 aa).

Thiamine diphosphate is bound by residues His72 and 113 to 115; that span reads GHS. A Mg(2+)-binding site is contributed by Asp144. Thiamine diphosphate-binding positions include 145 to 146, Asn173, Tyr284, and Glu367; that span reads GA. Asn173 contributes to the Mg(2+) binding site.

This sequence belongs to the transketolase family. DXPS subfamily. As to quaternary structure, homodimer. Mg(2+) serves as cofactor. Thiamine diphosphate is required as a cofactor.

The enzyme catalyses D-glyceraldehyde 3-phosphate + pyruvate + H(+) = 1-deoxy-D-xylulose 5-phosphate + CO2. It functions in the pathway metabolic intermediate biosynthesis; 1-deoxy-D-xylulose 5-phosphate biosynthesis; 1-deoxy-D-xylulose 5-phosphate from D-glyceraldehyde 3-phosphate and pyruvate: step 1/1. Catalyzes the acyloin condensation reaction between C atoms 2 and 3 of pyruvate and glyceraldehyde 3-phosphate to yield 1-deoxy-D-xylulose-5-phosphate (DXP). This is 1-deoxy-D-xylulose-5-phosphate synthase from Bacillus cereus (strain ATCC 10987 / NRS 248).